The sequence spans 262 residues: Acyl-[acyl-carrier-protein]--UDP-N-acetylglucosamine O-acyltransferase (262 aa).

Belongs to the transferase hexapeptide repeat family. LpxA subfamily. In terms of assembly, homotrimer.

It is found in the cytoplasm. It catalyses the reaction a (3R)-hydroxyacyl-[ACP] + UDP-N-acetyl-alpha-D-glucosamine = a UDP-3-O-[(3R)-3-hydroxyacyl]-N-acetyl-alpha-D-glucosamine + holo-[ACP]. The protein operates within glycolipid biosynthesis; lipid IV(A) biosynthesis; lipid IV(A) from (3R)-3-hydroxytetradecanoyl-[acyl-carrier-protein] and UDP-N-acetyl-alpha-D-glucosamine: step 1/6. In terms of biological role, involved in the biosynthesis of lipid A, a phosphorylated glycolipid that anchors the lipopolysaccharide to the outer membrane of the cell. This Salmonella paratyphi B (strain ATCC BAA-1250 / SPB7) protein is Acyl-[acyl-carrier-protein]--UDP-N-acetylglucosamine O-acyltransferase.